Reading from the N-terminus, the 392-residue chain is Formate-dependent phosphoribosylglycinamide formyltransferase (392 aa).

N(1)-(5-phospho-beta-D-ribosyl)glycinamide is bound by residues 22–23 (EL) and Glu82. ATP is bound by residues Arg114, Lys155, 160-165 (SSGKGQ), 195-198 (EKII), and Glu203. The ATP-grasp domain occupies 119–308 (VLVSKKLNIL…EFALHVRSFL (190 aa)). Mg(2+)-binding residues include Glu267 and Glu279. Residues Asp286, Lys355, and 362–363 (RR) contribute to the N(1)-(5-phospho-beta-D-ribosyl)glycinamide site.

It belongs to the PurK/PurT family. In terms of assembly, homodimer.

It catalyses the reaction N(1)-(5-phospho-beta-D-ribosyl)glycinamide + formate + ATP = N(2)-formyl-N(1)-(5-phospho-beta-D-ribosyl)glycinamide + ADP + phosphate + H(+). Its pathway is purine metabolism; IMP biosynthesis via de novo pathway; N(2)-formyl-N(1)-(5-phospho-D-ribosyl)glycinamide from N(1)-(5-phospho-D-ribosyl)glycinamide (formate route): step 1/1. Functionally, involved in the de novo purine biosynthesis. Catalyzes the transfer of formate to 5-phospho-ribosyl-glycinamide (GAR), producing 5-phospho-ribosyl-N-formylglycinamide (FGAR). Formate is provided by PurU via hydrolysis of 10-formyl-tetrahydrofolate. This chain is Formate-dependent phosphoribosylglycinamide formyltransferase, found in Wigglesworthia glossinidia brevipalpis.